The primary structure comprises 185 residues: Large ribosomal subunit protein bL25 (185 aa).

The protein belongs to the bacterial ribosomal protein bL25 family. CTC subfamily. Part of the 50S ribosomal subunit; part of the 5S rRNA/L5/L18/L25 subcomplex. Contacts the 5S rRNA. Binds to the 5S rRNA independently of L5 and L18.

Its function is as follows. This is one of the proteins that binds to the 5S RNA in the ribosome where it forms part of the central protuberance. The polypeptide is Large ribosomal subunit protein bL25 (Chlamydia trachomatis serovar A (strain ATCC VR-571B / DSM 19440 / HAR-13)).